A 46-amino-acid polypeptide reads, in one-letter code: Succinate dehydrogenase subunit 8, mitochondrial (46 aa).

Component of complex II composed of eight subunits in plants: four classical SDH subunits SDH1, SDH2, SDH3 and SDH4 (a flavoprotein (FP), an iron-sulfur protein (IP), and a cytochrome b composed of a large and a small subunit.), as well as four subunits unknown in mitochondria from bacteria and heterotrophic eukaryotes.

It localises to the mitochondrion inner membrane. It participates in carbohydrate metabolism; tricarboxylic acid cycle. This is Succinate dehydrogenase subunit 8, mitochondrial from Arabidopsis thaliana (Mouse-ear cress).